The primary structure comprises 690 residues: Beta-galactosidase (690 aa).

A substrate-binding site is contributed by asparagine 173. The active-site Proton donor is glutamate 174. Tryptophan 345 serves as a coordination point for substrate.

Belongs to the glycosyl hydrolase 42 family.

It carries out the reaction Hydrolysis of terminal non-reducing beta-D-galactose residues in beta-D-galactosides.. With respect to regulation, activity stimulated by beta-mercaptoethanol. Its function is as follows. Highly specific towards beta-D-galactoside substrates. Hydrolyzes 5-bromo-4-chloro-3-indolyl-beta-D-galactopyranoside (X-Gal) and o-nitrophenyl-beta-D-galactopyranoside (ONPG). Has activity against p-nitrophenyl(pNP)-beta-D-galactoside, but not significantly at all towards pNP-alpha-D-galactoside, pNP-beta-D-glucoside, pNP-beta-D-mannoside, pNP-beta-L-fucoside, pNP-beta-D-xyloside, pNP-beta-L-arabinoside, pNP-beta-D-galuronide, pNP-beta-D-glucuronide, pNP-beta-D-lactoside or pNP-beta-D-cellobioside. This Arthrobacter sp protein is Beta-galactosidase.